We begin with the raw amino-acid sequence, 862 residues long: Cell surface glycoprotein (862 aa).

A signal peptide spans 1–34 (MTDTQQKIKAVLLTVLMVTSVFAATIAFSGAAAA). Disordered regions lie at residues 35–60 (SERG…SAGN), 101–126 (ILLE…EGTE), and 200–220 (VNTN…DRDD). Residues 43 to 57 (YTTGPTDGNQDNVDS) show a composition bias toward polar residues. The span at 206–220 (NDDHPNPAADGDRDD) shows a compositional bias: basic and acidic residues. Asn442, Asn520, Asn550, Asn702, and Asn761 each carry an N-linked (GlcNAc...) asparagine glycan. The disordered stretch occupies residues 752–838 (LSDENVEPGN…TEEATTEATG (87 aa)). Residues 784–801 (SLEEEQPATDTPEPDTDT) are compositionally biased toward acidic residues. Residues 802-815 (PEPATDTPEPATDT) show a composition bias toward low complexity. Residues 816–833 (PEPDTDTPEPDTETEEAT) are compositionally biased toward acidic residues. A helical transmembrane segment spans residues 838–858 (GPGFTAAIALIALVAAALLAV). The PGF sorting signal signature appears at 839 to 841 (PGF).

It belongs to the halobacterial S-layer protein family. Post-translationally, glycosylated. In terms of processing, cleaved by the archaeosortase ArtA at the C-terminus, with removal of a short hydrophobic segment. Lipidation.

Its subcellular location is the secreted. The protein resides in the cell wall. It is found in the S-layer. The protein localises to the cell membrane. S-layer protein. The S-layer is a paracrystalline mono-layered assembly of proteins which coat the surface of the cell. The polypeptide is Cell surface glycoprotein (Haloarcula japonica (strain ATCC 49778 / DSM 6131 / JCM 7785 / NBRC 101032 / NCIMB 13157 / TR-1)).